Reading from the N-terminus, the 316-residue chain is Tetrahydromethanopterin S-methyltransferase subunit H (316 aa).

Belongs to the MtrH family. The complex is composed of 8 subunits; MtrA, MtrB, MtrC, MtrD, MtrE, MtrF, MtrG and MtrH.

It carries out the reaction 5-methyl-5,6,7,8-tetrahydromethanopterin + coenzyme M + 2 Na(+)(in) = 5,6,7,8-tetrahydromethanopterin + methyl-coenzyme M + 2 Na(+)(out). It functions in the pathway one-carbon metabolism; methanogenesis from CO(2); methyl-coenzyme M from 5,10-methylene-5,6,7,8-tetrahydromethanopterin: step 2/2. In terms of biological role, part of a complex that catalyzes the formation of methyl-coenzyme M and tetrahydromethanopterin from coenzyme M and methyl-tetrahydromethanopterin. This is an energy-conserving, sodium-ion translocating step. MtrH catalyzes the transfer of the methyl group from methyl-tetrahydromethanopterin to the corrinoid prosthetic group of MtrA. The protein is Tetrahydromethanopterin S-methyltransferase subunit H of Methanosarcina acetivorans (strain ATCC 35395 / DSM 2834 / JCM 12185 / C2A).